Consider the following 446-residue polypeptide: Questin oxidase (446 aa).

It belongs to the questin oxidase family.

It carries out the reaction questin + NADPH + O2 = demethylsulochrin + NADP(+). It functions in the pathway secondary metabolite biosynthesis. Functionally, questin oxidase; part of the gene cluster that mediates the biosynthesis of geodin, an intermediate in the biosynthesis of other natural products. The pathway begins with the synthesis of atrochrysone thioester by the polyketide synthase (PKS) gedC. The atrochrysone carboxyl ACP thioesterase gedB then breaks the thioester bond and releases the atrochrysone carboxylic acid from gedC. The atrochrysone carboxylic acid is then converted to atrochrysone which is further transformed into emodinanthrone. The next step is performed by the emodinanthrone oxygenase gedH that catalyzes the oxidation of emodinanthrone to emodin. Emodin O-methyltransferase encoded probably by gedA then catalyzes methylation of the 8-hydroxy group of emodin to form questin. Ring cleavage of questin by questin oxidase gedK leads to desmethylsulochrin via several intermediates including questin epoxide. Another methylation step probably catalyzed by methyltransferase gedG leads to the formation of sulochrin which is further converted to dihydrogeodin by the sulochrin halogenase gedL. Finally, the dihydrogeodin oxidase gedJ catalyzes the stereospecific phenol oxidative coupling reaction converting dihydrogeodin to geodin. This is Questin oxidase from Aspergillus terreus (strain NIH 2624 / FGSC A1156).